We begin with the raw amino-acid sequence, 177 residues long: Neuroblastoma suppressor of tumorigenicity 1 (177 aa).

Residues 1 to 16 (MLWFVVGALFPALLLA) form the signal peptide. 5 cysteine pairs are disulfide-bonded: cysteine 34/cysteine 84, cysteine 48/cysteine 98, cysteine 58/cysteine 117, cysteine 62/cysteine 119, and cysteine 81/cysteine 122. The region spanning 34–123 (CEAKNITQIV…ILHCSCQACG (90 aa)) is the CTCK domain. The disordered stretch occupies residues 143–177 (MPAEGPGPHHYAHHQQEVEEPPASSHHHHEEEGDE).

This sequence belongs to the DAN family.

It localises to the secreted. Its function is as follows. May act as a tumor suppressor. The sequence is that of Neuroblastoma suppressor of tumorigenicity 1 (NBL1) from Gallus gallus (Chicken).